Reading from the N-terminus, the 465-residue chain is Gamma-aminobutyric acid receptor subunit gamma-1 (465 aa).

An N-terminal signal peptide occupies residues 1 to 20; it reads MGSGKVFLFSPSLLWSQTRG. At 21 to 273 the chain is on the extracellular side; that stretch reads VRLIFLLLTL…FDLSRRMGYF (253 aa). N-linked (GlcNAc...) asparagine glycans are attached at residues N50 and N127. A disulfide bridge links C188 with C202. N-linked (GlcNAc...) asparagine glycosylation is present at N245. Residues 274 to 294 traverse the membrane as a helical segment; that stretch reads TIQTYIPCILTVVLSWVSFWI. At 295–300 the chain is on the cytoplasmic side; it reads NKDAVP. Residues 301 to 320 traverse the membrane as a helical segment; it reads ARTSLGITTVLTMTTLSTIA. Residues 321-328 are Extracellular-facing; the sequence is RKSLPKVS. A helical transmembrane segment spans residues 329–349; that stretch reads YVTAMDLFVSVCFIFVFAALM. Residues 350–444 are Cytoplasmic-facing; that stretch reads EYGTLHYFTS…RIAKIDSYSR (95 aa). A helical membrane pass occupies residues 445-465; the sequence is IFFPTAFALFNLVYWVGYLYL.

It belongs to the ligand-gated ion channel (TC 1.A.9) family. Gamma-aminobutyric acid receptor (TC 1.A.9.5) subfamily. GABRG1 sub-subfamily. As to quaternary structure, heteropentamer, formed by a combination of alpha (GABRA1-6), beta (GABRB1-3), gamma (GABRG1-3), delta (GABRD), epsilon (GABRE), rho (GABRR1-3), pi (GABRP) and theta (GABRQ) chains, each subunit exhibiting distinct physiological and pharmacological properties. In terms of processing, may be palmitoylated. In terms of tissue distribution, expressed in brain.

It is found in the postsynaptic cell membrane. The protein localises to the cell membrane. The catalysed reaction is chloride(in) = chloride(out). Its function is as follows. Gamma subunit of the heteropentameric ligand-gated chloride channel gated by gamma-aminobutyric acid (GABA), a major inhibitory neurotransmitter in the brain. GABA-gated chloride channels, also named GABA(A) receptors (GABAAR), consist of five subunits arranged around a central pore and contain GABA active binding site(s) located at the alpha and beta subunit interface(s). When activated by GABA, GABAARs selectively allow the flow of chloride anions across the cell membrane down their electrochemical gradient. Chloride influx into the postsynaptic neuron following GABAAR opening decreases the neuron ability to generate a new action potential, thereby reducing nerve transmission. The polypeptide is Gamma-aminobutyric acid receptor subunit gamma-1 (Rattus norvegicus (Rat)).